Reading from the N-terminus, the 127-residue chain is Aspartate 1-decarboxylase (127 aa).

Residue Ser-25 is the Schiff-base intermediate with substrate; via pyruvic acid of the active site. Ser-25 bears the Pyruvic acid (Ser) mark. A substrate-binding site is contributed by Thr-57. Residue Tyr-58 is the Proton donor of the active site. Residue 73-75 (GAA) participates in substrate binding.

This sequence belongs to the PanD family. As to quaternary structure, heterooctamer of four alpha and four beta subunits. It depends on pyruvate as a cofactor. Is synthesized initially as an inactive proenzyme, which is activated by self-cleavage at a specific serine bond to produce a beta-subunit with a hydroxyl group at its C-terminus and an alpha-subunit with a pyruvoyl group at its N-terminus.

It localises to the cytoplasm. It carries out the reaction L-aspartate + H(+) = beta-alanine + CO2. Its pathway is cofactor biosynthesis; (R)-pantothenate biosynthesis; beta-alanine from L-aspartate: step 1/1. Functionally, catalyzes the pyruvoyl-dependent decarboxylation of aspartate to produce beta-alanine. This chain is Aspartate 1-decarboxylase, found in Anoxybacillus flavithermus (strain DSM 21510 / WK1).